We begin with the raw amino-acid sequence, 189 residues long: Holliday junction branch migration complex subunit RuvA (189 aa).

The domain I stretch occupies residues 1–62 (MIVALKGNIE…EEAWSLYGFA (62 aa)). The interval 63-138 (EEAEKRVFDT…FSLSLQEGSK (76 aa)) is domain II. Residues 138 to 139 (KA) are flexible linker. Residues 140–189 (STPPVFEESRLALESLGFKSELIAKALQNIQATTTQEIIKEALKKLQTLR) are domain III.

Belongs to the RuvA family. In terms of assembly, homotetramer. Forms an RuvA(8)-RuvB(12)-Holliday junction (HJ) complex. HJ DNA is sandwiched between 2 RuvA tetramers; dsDNA enters through RuvA and exits via RuvB. An RuvB hexamer assembles on each DNA strand where it exits the tetramer. Each RuvB hexamer is contacted by two RuvA subunits (via domain III) on 2 adjacent RuvB subunits; this complex drives branch migration. In the full resolvosome a probable DNA-RuvA(4)-RuvB(12)-RuvC(2) complex forms which resolves the HJ.

The protein localises to the cytoplasm. Functionally, the RuvA-RuvB-RuvC complex processes Holliday junction (HJ) DNA during genetic recombination and DNA repair, while the RuvA-RuvB complex plays an important role in the rescue of blocked DNA replication forks via replication fork reversal (RFR). RuvA specifically binds to HJ cruciform DNA, conferring on it an open structure. The RuvB hexamer acts as an ATP-dependent pump, pulling dsDNA into and through the RuvAB complex. HJ branch migration allows RuvC to scan DNA until it finds its consensus sequence, where it cleaves and resolves the cruciform DNA. The protein is Holliday junction branch migration complex subunit RuvA of Wolinella succinogenes (strain ATCC 29543 / DSM 1740 / CCUG 13145 / JCM 31913 / LMG 7466 / NCTC 11488 / FDC 602W) (Vibrio succinogenes).